Consider the following 105-residue polypeptide: NADH-quinone oxidoreductase subunit K (105 aa).

3 helical membrane passes run 9-29 (PNYYLVLAAVLFTIGAAGVLV), 34-54 (IVLFMCVELMLNAANLTLVTF), and 65-85 (IMAFFVMVVAAAEVVVGLAII).

The protein belongs to the complex I subunit 4L family. NDH-1 is composed of 14 different subunits. Subunits NuoA, H, J, K, L, M, N constitute the membrane sector of the complex.

Its subcellular location is the cell membrane. It carries out the reaction a quinone + NADH + 5 H(+)(in) = a quinol + NAD(+) + 4 H(+)(out). Functionally, NDH-1 shuttles electrons from NADH, via FMN and iron-sulfur (Fe-S) centers, to quinones in the respiratory chain. The immediate electron acceptor for the enzyme in this species is believed to be a menaquinone. Couples the redox reaction to proton translocation (for every two electrons transferred, four hydrogen ions are translocated across the cytoplasmic membrane), and thus conserves the redox energy in a proton gradient. The chain is NADH-quinone oxidoreductase subunit K from Salinispora tropica (strain ATCC BAA-916 / DSM 44818 / JCM 13857 / NBRC 105044 / CNB-440).